The following is a 37-amino-acid chain: Large ribosomal subunit protein bL36 (37 aa).

Belongs to the bacterial ribosomal protein bL36 family.

This chain is Large ribosomal subunit protein bL36, found in Bacillus pumilus (strain SAFR-032).